We begin with the raw amino-acid sequence, 421 residues long: MSDTAELTTDPTPDLTKGDTITVEVTRPAHGGEGIAHHGGRVIFVRGGFPGDDVDVEITQVKKRFARGFVVQVNVASPHRVDSRCPAAAAGAGCCDYAELSPEAELEIKSRVLTDQLQRIGGLADIPTPELFELEPSQGWRTRVRLGVDASGRAGFRKLRSNDLVTDVACSQVVPELIDGLVGPGARTFTPDSEVIAAIDDRGVRTVVEVRKAPRGRRAETILHVLEGDGSVEQTVGDHTWTFPVSGFWQAHTKAPGAYSAFIGEVLDGAELVDVDKRGPVAWDLYGGVGLFVPVINRALGAHVHSVELSEGSAEAGDDALAGLPVTFHAGRVESVTSQLPKPHVVVLDPPRTGAGSDVVATIAGAKPQLVVHIGCDPATFARDVADWSAGGYTLDRLAVFNAFPATHHYETIGVFTRKSA.

The region spanning 14 to 72 (DLTKGDTITVEVTRPAHGGEGIAHHGGRVIFVRGGFPGDDVDVEITQVKKRFARGFVVQ) is the TRAM domain. Residues glutamine 250, tyrosine 286, glutamate 308, and aspartate 349 each coordinate S-adenosyl-L-methionine. Residue cysteine 376 is the Nucleophile of the active site.

It belongs to the class I-like SAM-binding methyltransferase superfamily. RNA M5U methyltransferase family.

This is an uncharacterized protein from Corynebacterium efficiens (strain DSM 44549 / YS-314 / AJ 12310 / JCM 11189 / NBRC 100395).